The primary structure comprises 198 residues: ADP-ribosylation factor-like protein 3 (198 aa).

Residue Met-1 is modified to N-acetylmethionine. Residue 24 to 31 (GLDNAGKT) coordinates GTP. A Glycyl lysine isopeptide (Lys-Gly) (interchain with G-Cter in ubiquitin) cross-link involves residue Lys-50. Residues 74 to 78 (DVGGQ) and 133 to 136 (NKQD) contribute to the GTP site.

This sequence belongs to the small GTPase superfamily. Arf family. In terms of assembly, interacts with SYS1 and SLO1.

Its subcellular location is the golgi apparatus. Involved in the targeting of ARL1 to the Golgi. Can bind and hydrolyze GTP. The protein is ADP-ribosylation factor-like protein 3 (ARL3) of Saccharomyces cerevisiae (strain ATCC 204508 / S288c) (Baker's yeast).